The chain runs to 455 residues: L-serine dehydratase 2 (455 aa).

It belongs to the iron-sulfur dependent L-serine dehydratase family. The cofactor is [4Fe-4S] cluster. In terms of processing, activated by post-translational modification by a system involving at least three gene products. Activation is mimicked in vitro by iron and dithiothreitol. There is considerable evidence for a free-radical activation mechanism.

It catalyses the reaction L-serine = pyruvate + NH4(+). Its pathway is carbohydrate biosynthesis; gluconeogenesis. Its function is as follows. Also deaminates threonine, particularly when it is present in high concentration. In Escherichia coli (strain K12), this protein is L-serine dehydratase 2 (sdaB).